A 351-amino-acid polypeptide reads, in one-letter code: MTPEYFLRSLLMMILAVFSANASNWLYLAKLSSVGSISEEETCEKLKGPIQRQVQMCKRNLEVMDSVRRGAQLAIEECQYQFRNRRWNCSTLDTLPVFGKVVTQGTREAAFVYAISSAGVAFAVTRACSSGDLEKCGCDRTVHGVSPQGFQWSGCSDNILYGVAFSQSFVDVRERSKGGSSSRALMNLHNNEAGRKAILNNMRVECKCHGVSGSCEVKTCWKAMPTFRKVGNVLKEKFDGATEVEQKKIGSTKVLVPKNSQFKPHTDEDLVYLDSSPDFCDHDLKNGVLGTTGRQCNKTSKAIDGCELMCCGRGFHTEEVEIVERCSCKFHWCCFVKCKQCHKVVEMHTCR.

The first 22 residues, 1–22, serve as a signal peptide directing secretion; it reads MTPEYFLRSLLMMILAVFSANA. Disulfide bonds link C78–C89, C128–C136, C138–C155, C206–C220, C208–C215, C280–C311, C296–C306, C310–C350, C326–C341, C328–C338, and C333–C334. N88 is a glycosylation site (N-linked (GlcNAc...) asparagine). Residue S212 is the site of O-palmitoleoyl serine; by PORCN attachment. N-linked (GlcNAc...) asparagine glycosylation occurs at N297.

This sequence belongs to the Wnt family. Post-translationally, palmitoleoylation is required for efficient binding to frizzled receptors. Depalmitoleoylation leads to Wnt signaling pathway inhibition. Expressed in the brain and floor plate. In the developing pronephros, expressed in the proximal tubules and nephrostomes but absent from the pronephric duct.

It localises to the secreted. The protein localises to the extracellular space. Its subcellular location is the extracellular matrix. Ligand for members of the frizzled family of seven transmembrane receptors. Plays an important role in embryonic kidney development. Acts downstream of Notch signaling during pronephric kidney development. During early pronephros development, patterns the proximal pronephric anlagen to promote glomus and nephrostome formation. Also required later in pronephros development for tubulogenesis. The protein is Protein Wnt-4 (wnt4) of Xenopus laevis (African clawed frog).